A 238-amino-acid chain; its full sequence is DNA repair protein RAD59 (238 aa).

Belongs to the RAD52 family. Interacts with RAD51 and RAD52.

It localises to the nucleus. In terms of biological role, involved in the repair of double-strand breaks in DNA during vegetative growth via recombination and single-strand annealing. Anneals complementary single-stranded DNA. The protein is DNA repair protein RAD59 (RAD59) of Saccharomyces cerevisiae (strain ATCC 204508 / S288c) (Baker's yeast).